Reading from the N-terminus, the 604-residue chain is UvrABC system protein C (604 aa).

A GIY-YIG domain is found at 10-89; it reads ELPGVYLMKD…VKKNRPHYNI (80 aa). Residues 199–234 enclose the UVR domain; that stretch reads SGTIKELQEKMNIHAIAQEYESAAVIRDQIDALKSL.

It belongs to the UvrC family. As to quaternary structure, interacts with UvrB in an incision complex.

It is found in the cytoplasm. In terms of biological role, the UvrABC repair system catalyzes the recognition and processing of DNA lesions. UvrC both incises the 5' and 3' sides of the lesion. The N-terminal half is responsible for the 3' incision and the C-terminal half is responsible for the 5' incision. The polypeptide is UvrABC system protein C (Methanococcoides burtonii (strain DSM 6242 / NBRC 107633 / OCM 468 / ACE-M)).